We begin with the raw amino-acid sequence, 151 residues long: Neuroglobin (151 aa).

One can recognise a Globin domain in the interval Met1–Gly149. Positions 64 and 96 each coordinate heme b.

This sequence belongs to the globin family. Monomer. Homodimer and homotetramer; disulfide-linked. Mainly monomeric but also detected as part of homodimers and homotetramers. Interacts with 14-3-3 proteins; regulates the phosphorylation of NGB. Could interact (ferrous form) with G-alpha(i) proteins (GTP-bound form). Phosphorylated during hypoxia by ERK1/ERK2. Phosphorylation regulates the heme pocket hexacoordination preventing the association of His-64 with the heme metal center. Thereby, promotes the access of dioxygen and nitrite to the heme and stimulates the nitrite reductase activity. Phosphorylation during hypoxia is stabilized by 14-3-3 proteins.

The protein resides in the cytoplasm. It is found in the cytosol. The protein localises to the mitochondrion matrix. It catalyses the reaction Fe(III)-heme b-[protein] + nitric oxide + H2O = Fe(II)-heme b-[protein] + nitrite + 2 H(+). Its function is as follows. Monomeric globin with a bis-histidyl six-coordinate heme-iron atom through which it can bind dioxygen, carbon monoxide and nitric oxide. Could help transport oxygen and increase its availability to the metabolically active neuronal tissues, though its low quantity in tissues as well as its high affinity for dioxygen, which may limit its oxygen-releasing ability, argue against it. The ferrous/deoxygenated form exhibits a nitrite reductase activity and it could produce nitric oxide which in turn inhibits cellular respiration in response to hypoxia. In its ferrous/deoxygenated state, it may also exhibit GDI (Guanine nucleotide Dissociation Inhibitor) activity toward heterotrimeric G-alpha proteins, thereby regulating signal transduction to facilitate neuroprotective responses in the wake of hypoxia and associated oxidative stress. This chain is Neuroglobin, found in Bos taurus (Bovine).